The primary structure comprises 381 residues: Succinyl-diaminopimelate desuccinylase (381 aa).

H72 contacts Zn(2+). D74 is an active-site residue. Residue D105 participates in Zn(2+) binding. Catalysis depends on E139, which acts as the Proton acceptor. Zn(2+)-binding residues include E140, E168, and H354.

This sequence belongs to the peptidase M20A family. DapE subfamily. In terms of assembly, homodimer. The cofactor is Zn(2+). It depends on Co(2+) as a cofactor.

The catalysed reaction is N-succinyl-(2S,6S)-2,6-diaminopimelate + H2O = (2S,6S)-2,6-diaminopimelate + succinate. It participates in amino-acid biosynthesis; L-lysine biosynthesis via DAP pathway; LL-2,6-diaminopimelate from (S)-tetrahydrodipicolinate (succinylase route): step 3/3. In terms of biological role, catalyzes the hydrolysis of N-succinyl-L,L-diaminopimelic acid (SDAP), forming succinate and LL-2,6-diaminopimelate (DAP), an intermediate involved in the bacterial biosynthesis of lysine and meso-diaminopimelic acid, an essential component of bacterial cell walls. The chain is Succinyl-diaminopimelate desuccinylase from Shewanella sp. (strain MR-7).